We begin with the raw amino-acid sequence, 422 residues long: MTVSSTVQPLKACVPEATEAADMPHHTLSKSMTFANLDQYQYWHAVGPMLGRMLSNGSYSIHKQYEYLCLFAHVIIPKLGPFPGGRDIYKCLLGGTGSVELSQNVQKLGLTARVAFEPTSYIASTGVDPLNRHTVHATLVELRAIGSASIDMELHQMLVNELTLTDREERLMSPEAISGTAWKTQILLALDLGQTGITIKEYFYPALKASVTGQSVAKLCFSAIRKVDKQGRFEPASKAIETYMKTQSQTDLYFLSCDLVDPAATRIKLYLMELDMRLAKVEEHWTMGGKLNDEETLLGLKMLQELWVEFGIIEGMRNEPERPSLPGDPDTIVPFIMNYEMSPGEALPKPKFYFPLVGIPELKIANVLTAFFERYGMPEQAAVYRNNLQTPSKDLVIATDHQAWLSFSYTKKKGPYLTMYYH.

Position 100 (Glu100) interacts with substrate. Dimethylallyl diphosphate-binding residues include Arg113, Lys200, and Tyr202. Tyr204 is a binding site for substrate. 5 residues coordinate dimethylallyl diphosphate: Lys268, Tyr270, Tyr353, Tyr416, and Tyr420.

Belongs to the tryptophan dimethylallyltransferase family.

It participates in alkaloid biosynthesis. In terms of biological role, roquefortine prenyltransferase; part of the gene cluster that mediates the biosynthesis of the mycotoxins roquefortine C and meleagrin. The first stage is catalyzed by the dipeptide synthase roqA which condenses histidine and tryptophan to produce histidyltryptophanyldiketopiperazine (HTD). HTD is then converted to roquefortine C through two possible pathways. In the first pathway, prenyltransferase roqD transforms HTD to the intermediate roquefortine D, which is in turn converted to roquefortine C by the cytochrome P450 monooxygenase roqR. In the second pathway, HTD is first converted to the intermediate dehydrohistidyltryptophanyldi-ketopiperazine (DHTD) by roqR which is then prenylated by roqD to form roquefortine C. Roquefortine C can be further transformed to meleagrin via three more reactions including oxydation to glandicolin A by roqM, which is further reduced to glandicoline B by roqO. Finally, glandicoline B is converted to meleagrin by the glandicoline B O-methyltransferase roqN. More studies identified further branching and additional metabolites produced by the roquefortine/meleagrin cluster, including roquefortine F, roquefortine L, roquefortine M, roquefortine N and neoxaline. The polypeptide is Roquefortine prenyltransferase roqD (Penicillium rubens (strain ATCC 28089 / DSM 1075 / NRRL 1951 / Wisconsin 54-1255) (Penicillium chrysogenum)).